We begin with the raw amino-acid sequence, 547 residues long: Chaperonin GroEL 1 (547 aa).

ATP-binding positions include 30–33 (TLGP), K51, 87–91 (DGTTT), G415, and D495.

The protein belongs to the chaperonin (HSP60) family. In terms of assembly, forms a cylinder of 14 subunits composed of two heptameric rings stacked back-to-back. Interacts with the co-chaperonin GroES.

It is found in the cytoplasm. It carries out the reaction ATP + H2O + a folded polypeptide = ADP + phosphate + an unfolded polypeptide.. Functionally, together with its co-chaperonin GroES, plays an essential role in assisting protein folding. The GroEL-GroES system forms a nano-cage that allows encapsulation of the non-native substrate proteins and provides a physical environment optimized to promote and accelerate protein folding. This chain is Chaperonin GroEL 1, found in Rhizobium johnstonii (strain DSM 114642 / LMG 32736 / 3841) (Rhizobium leguminosarum bv. viciae).